Consider the following 140-residue polypeptide: MALTWPSSPPVLLTLLLSLLALQLCAVYGSYEHTCTLATRSRGAHPSGICGRNLARIVSVLCTPRGYVSNWFTKRSAPNKPAETFVDQNLRGVLLNKREALSYLRPREPRATRGTFGSQGITCECCFNQCTYYELLQYCN.

The signal sequence occupies residues 1-29 (MALTWPSSPPVLLTLLLSLLALQLCAVYG). 4 disulfides stabilise this stretch: Cys35–Cys123, Cys50–Cys126, Cys62–Cys139, and Cys125–Cys130. A propeptide spans 64–110 (PRGYVSNWFTKRSAPNKPAETFVDQNLRGVLLNKREALSYLRPREPR) (c peptide). Position 134 is a 4-carboxyglutamate; partial (Glu134).

It belongs to the insulin family. Heterodimer of A and B chains; disulfide-linked. In terms of tissue distribution, expressed by the venom gland.

The protein resides in the secreted. Its function is as follows. This venom insulin facilitates prey capture by rapidly inducing hypoglycemic shock. Intraperitoneal injection of this peptide into zebrafish lowers blood glucose with the same potency than human insulin. In vivo, when applied to water, this peptide reduces overall locomotor activity of zebrafish larvae, observed as a significant decrease in the percentage of time spent swimming and movement frequency. In Conus imperialis (Imperial cone), this protein is Con-Ins Im2.